The sequence spans 151 residues: Ribonuclease H (151 aa).

The RNase H type-1 domain occupies 1-143 (MYKKIEIFTD…CDQLARLAAK (143 aa)). Mg(2+) contacts are provided by Asp-10, Glu-48, Asp-70, and Asp-135.

This sequence belongs to the RNase H family. As to quaternary structure, monomer. The cofactor is Mg(2+).

It localises to the cytoplasm. The catalysed reaction is Endonucleolytic cleavage to 5'-phosphomonoester.. Functionally, endonuclease that specifically degrades the RNA of RNA-DNA hybrids. This Blochmanniella pennsylvanica (strain BPEN) protein is Ribonuclease H.